Reading from the N-terminus, the 340-residue chain is HPr kinase/phosphorylase (340 aa).

Active-site residues include H153 and K174. 168-175 (GNSGLGKS) lines the ATP pocket. S175 is a Mg(2+) binding site. D192 (proton acceptor; for phosphorylation activity. Proton donor; for dephosphorylation activity) is an active-site residue. Residues 216–225 (MEIRGLGVVD) are important for the catalytic mechanism of both phosphorylation and dephosphorylation. Residue E217 participates in Mg(2+) binding. Residue R258 is part of the active site. Residues 279 to 284 (PINPGK) are important for the catalytic mechanism of dephosphorylation.

The protein belongs to the HPrK/P family. As to quaternary structure, homohexamer. It depends on Mg(2+) as a cofactor.

The enzyme catalyses [HPr protein]-L-serine + ATP = [HPr protein]-O-phospho-L-serine + ADP + H(+). The catalysed reaction is [HPr protein]-O-phospho-L-serine + phosphate + H(+) = [HPr protein]-L-serine + diphosphate. Catalyzes the ATP- as well as the pyrophosphate-dependent phosphorylation of a specific serine residue in HPr, a phosphocarrier protein of the phosphoenolpyruvate-dependent sugar phosphotransferase system (PTS). HprK/P also catalyzes the pyrophosphate-producing, inorganic phosphate-dependent dephosphorylation (phosphorolysis) of seryl-phosphorylated HPr (P-Ser-HPr). The chain is HPr kinase/phosphorylase from Prosthecochloris aestuarii (strain DSM 271 / SK 413).